We begin with the raw amino-acid sequence, 215 residues long: Pyrrolidone-carboxylate peptidase 1 (215 aa).

Residues Glu-80, Cys-143, and His-167 contribute to the active site.

The protein belongs to the peptidase C15 family. In terms of assembly, homotetramer.

The protein resides in the cytoplasm. The catalysed reaction is Release of an N-terminal pyroglutamyl group from a polypeptide, the second amino acid generally not being Pro.. In terms of biological role, removes 5-oxoproline from various penultimate amino acid residues except L-proline. The protein is Pyrrolidone-carboxylate peptidase 1 of Ralstonia nicotianae (strain ATCC BAA-1114 / GMI1000) (Ralstonia solanacearum).